The chain runs to 485 residues: UDP-N-acetylmuramate--L-alanine ligase (485 aa).

An ATP-binding site is contributed by 120-126; sequence GSHGKTT.

Belongs to the MurCDEF family.

It localises to the cytoplasm. It carries out the reaction UDP-N-acetyl-alpha-D-muramate + L-alanine + ATP = UDP-N-acetyl-alpha-D-muramoyl-L-alanine + ADP + phosphate + H(+). It functions in the pathway cell wall biogenesis; peptidoglycan biosynthesis. Functionally, cell wall formation. The chain is UDP-N-acetylmuramate--L-alanine ligase from Rickettsia conorii (strain ATCC VR-613 / Malish 7).